Consider the following 471-residue polypeptide: Probable anion transporter 5, chloroplastic (471 aa).

Residues 1–59 (MAASASASALQAERCLLVGVGAGPRRHRLPLRMPPPLHAPPALLLLPHRRRRRWPPAVR) constitute a chloroplast transit peptide. The interval 56–76 (PAVRASPGEGGGGGGGGGGGG) is disordered. Helical transmembrane passes span 62-82 (PGEG…AGAL), 103-123 (IGVV…GFMP), 162-182 (VVFG…PPII), and 185-205 (LGWE…CLGF). The span at 63–76 (GEGGGGGGGGGGGG) shows a compositional bias: gly residues. Positions 226-247 (GQSPSGSSDLISSSVSPKSSES) are disordered. Low complexity predominate over residues 228–247 (SPSGSSDLISSSVSPKSSES). A run of 6 helical transmembrane segments spans residues 270-290 (VWAM…CLSW), 307-327 (AWVS…AAPF), 348-368 (IAFL…GVPP), 371-391 (IVAF…GLYC), 403-423 (ILLG…VALT), and 435-455 (ISLF…WLAF).

It belongs to the major facilitator superfamily. Sodium/anion cotransporter (TC 2.A.1.14) family.

Its subcellular location is the plastid. The protein resides in the chloroplast membrane. In terms of biological role, probable anion transporter. In Oryza sativa subsp. japonica (Rice), this protein is Probable anion transporter 5, chloroplastic (PHT4;5).